Reading from the N-terminus, the 431-residue chain is 3-phosphoshikimate 1-carboxyvinyltransferase (431 aa).

3-phosphoshikimate-binding residues include Lys-21, Ser-22, and Arg-26. Lys-21 lines the phosphoenolpyruvate pocket. Phosphoenolpyruvate contacts are provided by Gly-93 and Arg-122. 4 residues coordinate 3-phosphoshikimate: Ser-167, Gln-169, Asp-318, and Lys-345. A phosphoenolpyruvate-binding site is contributed by Gln-169. Asp-318 (proton acceptor) is an active-site residue. Residues Arg-349 and Arg-391 each coordinate phosphoenolpyruvate.

This sequence belongs to the EPSP synthase family. As to quaternary structure, monomer.

The protein resides in the cytoplasm. It catalyses the reaction 3-phosphoshikimate + phosphoenolpyruvate = 5-O-(1-carboxyvinyl)-3-phosphoshikimate + phosphate. The protein operates within metabolic intermediate biosynthesis; chorismate biosynthesis; chorismate from D-erythrose 4-phosphate and phosphoenolpyruvate: step 6/7. In terms of biological role, catalyzes the transfer of the enolpyruvyl moiety of phosphoenolpyruvate (PEP) to the 5-hydroxyl of shikimate-3-phosphate (S3P) to produce enolpyruvyl shikimate-3-phosphate and inorganic phosphate. The protein is 3-phosphoshikimate 1-carboxyvinyltransferase of Roseiflexus castenholzii (strain DSM 13941 / HLO8).